Consider the following 214-residue polypeptide: RNA pyrophosphohydrolase (214 aa).

Residues 6 to 149 form the Nudix hydrolase domain; sequence GFRPNVGIIL…KRDVYQLALT (144 aa). The short motif at 38–59 is the Nudix box element; the sequence is GGIKYGETPMQAMYRELHEETG.

It belongs to the Nudix hydrolase family. RppH subfamily. A divalent metal cation serves as cofactor.

In terms of biological role, accelerates the degradation of transcripts by removing pyrophosphate from the 5'-end of triphosphorylated RNA, leading to a more labile monophosphorylated state that can stimulate subsequent ribonuclease cleavage. The polypeptide is RNA pyrophosphohydrolase (Burkholderia orbicola (strain MC0-3)).